The sequence spans 265 residues: Urease accessory protein UreH (265 aa).

Belongs to the UreD family. UreH, UreF and UreG form a complex that acts as a GTP-hydrolysis-dependent molecular chaperone, activating the urease apoprotein by helping to assemble the nickel containing metallocenter of UreC. The UreE protein probably delivers the nickel.

It localises to the cytoplasm. Its function is as follows. Required for maturation of urease via the functional incorporation of the urease nickel metallocenter. The chain is Urease accessory protein UreH from Helicobacter pylori (strain G27).